Here is a 560-residue protein sequence, read N- to C-terminus: MRRAYFVAIALLVAAGGKTAAGFKHNEPLHASSSNFMASVDTVDEDLQSQNLQESRDPKDDLKLSAGNEERTPSALNNFLKEPKLLESIITAGKAMRTEGEANAIEAASKNLNQIESNKRQRIALTHNAVAGHRGHPSPDSDKSLMSVANENPLMLAESLKDQRPTAIMENAASLLKEHDYRLAPPESSTINDKAPDGRLKNQVVTQKAVQLDKNEHVDESFWREELVSVDQLMRLLDEFDKSAHPTTVNRHEESASAVALKSSNQLESITHQRIAPTSNNVIGQVAHAPSNNVIGQVAHAPSNNVIGQVAHAPSSLSPVLVAKNIPSILADRLMKKRPTAIMKNAARYLTQHINRPAPSGPSTNGATTSNGGLNNQLTSQKTFQLDQNKHVGDVKTFWLPTAVDRQSVPEDWADEVAKGPDTFSNDAVNDEVKRVHAAFLEALNLPFHQYPQETAMMLRMVRWKKNAGPNNDITSALFKTLAKDHEEVLRLQDLLGPDLKKLLGDGKMALPRNLKNLQEALIVKLVIMYDLFFRFCYKHEDFVGDLPHNPSPASWILKL.

A signal peptide spans 1–22 (MRRAYFVAIALLVAAGGKTAAG). Disordered stretches follow at residues 48 to 73 (QSQN…ERTP) and 354 to 377 (INRP…LNNQ). A compositionally biased stretch (basic and acidic residues) spans 54–72 (ESRDPKDDLKLSAGNEERT). The RxLR-dEER motif lies at 56–71 (RDPKDDLKLSAGNEER). Over residues 361 to 377 (GPSTNGATTSNGGLNNQ) the composition is skewed to polar residues.

Belongs to the RxLR effector family.

It localises to the secreted. It is found in the host nucleus. Secreted effector that completely suppresses the host cell death induced by cell death-inducing proteins. The sequence is that of Secreted RxLR effector protein 142 from Plasmopara viticola (Downy mildew of grapevine).